A 394-amino-acid chain; its full sequence is Proliferation-associated protein 2G4 (394 aa).

Serine 2 bears the N-acetylserine mark. The residue at position 2 (serine 2) is a Phosphoserine. The segment at 2-48 is necessary for nucleolar localization; sequence SGEDEQQEQTIAEDLVVTKYKMGGDIANRVLRSLVEASSSGVSVLSL. The interval 46 to 54 is RNA-binding; sequence LSLCEKGDA. Lysine 298 participates in a covalent cross-link: Glycyl lysine isopeptide (Lys-Gly) (interchain with G-Cter in SUMO2). The segment at 301–394 is necessary for nucleolar localization; it reads LLQPFNVLYE…ETLEENGAGD (94 aa). Residue serine 335 is modified to Phosphoserine. The segment at 358 to 394 is disordered; sequence LQSSASRKTQKKKKKKASKTAENATSGETLEENGAGD. A Phosphoserine; by PKC/PRKCD modification is found at serine 361. An interaction with RNA region spans residues 361–375; sequence SASRKTQKKKKKKAS. Residues 365–375 are compositionally biased toward basic residues; that stretch reads KTQKKKKKKAS. A phosphothreonine mark is found at threonine 366 and threonine 386.

The protein belongs to the peptidase M24 family. Isoform 2 interacts with the cytoplasmic domain of non-phosphorylated ERBB3; the interaction requires PKC activity. Interacts with AR. Treatment with HRG leads to dissociation from ERBB3 and increases association with AR. Interacts with nucleolin/NCL. Component of a ribonucleoprotein complex containing at least PA2G4, NCL, TOP1, PABPC2, RPLP0, acetylated histone H1 (HIST1H1A or H1F1), histone H1 2/4, RPL4, RPL8, RPL15, RPL18, RPL18A, RPL21, RPL11, RPL12, RPL28, RPL27, RPLP2 and RPL24. Interacts with HDAC2. Interacts with RB1; the interaction is enhanced upon PA2G4 dephosphorylation. Isoform 1 and isoform 2 interact with RNF20. Isoform 2 interacts with HUWE1. Interacts with AKT1. Interacts with DNAJC21. In terms of processing, phosphorylated on serine and threonine residues. Phosphorylation is enhanced by HRG treatment. Basal phosphorylation is PKC-dependent and HRG-induced phosphorylation is predominantly PKC-independent. Phosphorylation at Ser-361 by PKC/PRKCD regulates its nucleolar localization. Post-translationally, isoform 2 is polyubiquitinated, leading to proteasomal degradation and phosphorylation by PKC/PRKCD enhances polyubiquitination.

The protein localises to the cytoplasm. It is found in the nucleus. It localises to the nucleolus. Its function is as follows. May play a role in a ERBB3-regulated signal transduction pathway. Seems be involved in growth regulation. Acts a corepressor of the androgen receptor (AR) and is regulated by the ERBB3 ligand neuregulin-1/heregulin (HRG). Inhibits transcription of some E2F1-regulated promoters, probably by recruiting histone acetylase (HAT) activity. Binds RNA. Associates with 28S, 18S and 5.8S mature rRNAs, several rRNA precursors and probably U3 small nucleolar RNA. May be involved in regulation of intermediate and late steps of rRNA processing. May be involved in ribosome assembly. Mediates cap-independent translation of specific viral IRESs (internal ribosomal entry site). Together with PTBP1 is required for the translation initiation on the foot-and-mouth disease virus (FMDV) IRES. Regulates cell proliferation, differentiation, and survival. Isoform 1 suppresses apoptosis whereas isoform 2 promotes cell differentiation. This chain is Proliferation-associated protein 2G4 (Pa2g4), found in Rattus norvegicus (Rat).